The sequence spans 433 residues: tRNA-2-methylthio-N(6)-dimethylallyladenosine synthase (433 aa).

The region spanning 3 to 118 (KKLFIQTLGC…ITKAVNTPKF (116 aa)) is the MTTase N-terminal domain. 6 residues coordinate [4Fe-4S] cluster: Cys-12, Cys-49, Cys-81, Cys-150, Cys-154, and Cys-157. Residues 136 to 369 (RGSPYKSHIN…QNRHSEILDE (234 aa)) form the Radical SAM core domain. In terms of domain architecture, TRAM spans 372-433 (AAQKDKIFDV…RMVLYGELQI (62 aa)).

Belongs to the methylthiotransferase family. MiaB subfamily. As to quaternary structure, monomer. The cofactor is [4Fe-4S] cluster.

Its subcellular location is the cytoplasm. It carries out the reaction N(6)-dimethylallyladenosine(37) in tRNA + (sulfur carrier)-SH + AH2 + 2 S-adenosyl-L-methionine = 2-methylsulfanyl-N(6)-dimethylallyladenosine(37) in tRNA + (sulfur carrier)-H + 5'-deoxyadenosine + L-methionine + A + S-adenosyl-L-homocysteine + 2 H(+). Catalyzes the methylthiolation of N6-(dimethylallyl)adenosine (i(6)A), leading to the formation of 2-methylthio-N6-(dimethylallyl)adenosine (ms(2)i(6)A) at position 37 in tRNAs that read codons beginning with uridine. The protein is tRNA-2-methylthio-N(6)-dimethylallyladenosine synthase of Campylobacter concisus (strain 13826).